The chain runs to 98 residues: Putative septation protein SpoVG (98 aa).

This sequence belongs to the SpoVG family.

In terms of biological role, could be involved in septation. In Alkaliphilus metalliredigens (strain QYMF), this protein is Putative septation protein SpoVG.